A 1322-amino-acid polypeptide reads, in one-letter code: Phosphoribosylformylglycinamidine synthase (1322 aa).

ATP contacts are provided by residues 300 to 311 (GASTGAGGEIRD) and Ala-702. Asp-703, Glu-742, Asn-746, and Asp-915 together coordinate Mg(2+). Ser-917 is an ATP binding site. The Glutamine amidotransferase type-1 domain occupies 1073–1322 (VAILREQGIN…LFRNARAWVG (250 aa)). Cys-1166 functions as the Nucleophile in the catalytic mechanism. Active-site residues include His-1287 and Glu-1289.

The protein in the N-terminal section; belongs to the FGAMS family. Monomer.

The protein localises to the cytoplasm. The catalysed reaction is N(2)-formyl-N(1)-(5-phospho-beta-D-ribosyl)glycinamide + L-glutamine + ATP + H2O = 2-formamido-N(1)-(5-O-phospho-beta-D-ribosyl)acetamidine + L-glutamate + ADP + phosphate + H(+). The protein operates within purine metabolism; IMP biosynthesis via de novo pathway; 5-amino-1-(5-phospho-D-ribosyl)imidazole from N(2)-formyl-N(1)-(5-phospho-D-ribosyl)glycinamide: step 1/2. Phosphoribosylformylglycinamidine synthase involved in the purines biosynthetic pathway. Catalyzes the ATP-dependent conversion of formylglycinamide ribonucleotide (FGAR) and glutamine to yield formylglycinamidine ribonucleotide (FGAM) and glutamate. The polypeptide is Phosphoribosylformylglycinamidine synthase (Xylella fastidiosa (strain Temecula1 / ATCC 700964)).